The sequence spans 334 residues: Probable GTP 3',8-cyclase (334 aa).

The region spanning 24 to 256 is the Radical SAM core domain; the sequence is PYGRKVTGLR…RKKYMIDGVE (233 aa). Arginine 33 serves as a coordination point for GTP. Residues cysteine 40 and cysteine 44 each coordinate [4Fe-4S] cluster. Tyrosine 46 contacts S-adenosyl-L-methionine. [4Fe-4S] cluster is bound at residue cysteine 47. A GTP-binding site is contributed by lysine 85. Glycine 89 contacts S-adenosyl-L-methionine. Threonine 113 is a binding site for GTP. An S-adenosyl-L-methionine-binding site is contributed by serine 137. Position 176 (lysine 176) interacts with GTP. [4Fe-4S] cluster contacts are provided by cysteine 269 and cysteine 272. 274 to 276 provides a ligand contact to GTP; that stretch reads RLR. Cysteine 286 is a binding site for [4Fe-4S] cluster.

It belongs to the radical SAM superfamily. MoaA family. [4Fe-4S] cluster is required as a cofactor.

It catalyses the reaction GTP + AH2 + S-adenosyl-L-methionine = (8S)-3',8-cyclo-7,8-dihydroguanosine 5'-triphosphate + 5'-deoxyadenosine + L-methionine + A + H(+). It participates in cofactor biosynthesis; molybdopterin biosynthesis. Its function is as follows. Catalyzes the cyclization of GTP to (8S)-3',8-cyclo-7,8-dihydroguanosine 5'-triphosphate. The chain is Probable GTP 3',8-cyclase from Methanosarcina mazei (strain ATCC BAA-159 / DSM 3647 / Goe1 / Go1 / JCM 11833 / OCM 88) (Methanosarcina frisia).